The chain runs to 160 residues: Transcriptional repressor NrdR (160 aa).

A zinc finger spans residues 3-34 (CPYCQYEDTQVKDSRPSEEGTVIRRRRICSVC). Positions 49–139 (LLVLKKSGRY…VYRDFRNASD (91 aa)) constitute an ATP-cone domain.

The protein belongs to the NrdR family. Zn(2+) serves as cofactor.

Functionally, negatively regulates transcription of bacterial ribonucleotide reductase nrd genes and operons by binding to NrdR-boxes. The polypeptide is Transcriptional repressor NrdR (Bartonella henselae (strain ATCC 49882 / DSM 28221 / CCUG 30454 / Houston 1) (Rochalimaea henselae)).